The primary structure comprises 291 residues: 3-hydroxy-5-phosphonooxypentane-2,4-dione thiolase (291 aa).

Lysine 203 functions as the Schiff-base intermediate with substrate in the catalytic mechanism.

Belongs to the DeoC/FbaB aldolase family. As to quaternary structure, homodecamer.

It is found in the cytoplasm. It catalyses the reaction dihydroxyacetone phosphate + acetyl-CoA = 3-hydroxy-2,4-dioxopentyl phosphate + CoA. In terms of biological role, involved in the degradation of phospho-AI-2, thereby terminating induction of the lsr operon and closing the AI-2 signaling cycle. Catalyzes the transfer of an acetyl moiety from 3-hydroxy-5-phosphonooxypentane-2,4-dione to CoA to form glycerone phosphate and acetyl-CoA. In Yersinia enterocolitica serotype O:8 / biotype 1B (strain NCTC 13174 / 8081), this protein is 3-hydroxy-5-phosphonooxypentane-2,4-dione thiolase.